Here is a 359-residue protein sequence, read N- to C-terminus: Tricarboxylate transport protein A, mitochondrial (359 aa).

Solcar repeat units lie at residues 71–159 (THPW…LSNP), 170–256 (KASL…LRNW), and 266–351 (MHPL…VVKL). The next 4 helical transmembrane spans lie at 77–97 (IFAG…TEYV), 171–191 (ASLL…VCPM), 269–289 (LVTA…NTPL), and 336–356 (LDVA…NNVW).

Belongs to the mitochondrial carrier (TC 2.A.29) family. Possesses a short cleavable presequence, which, however, is found to be dispensable both for targeting to mitochondria and insertion into the inner membrane. However, the presequence is required to keep SLC25A1 in a soluble state and thus in an import-competent state. Mature SLC25A1 lacking the presequence is prone to aggregation.

The protein localises to the mitochondrion inner membrane. The enzyme catalyses (S)-malate(in) + citrate(out) = (S)-malate(out) + citrate(in). It carries out the reaction D-threo-isocitrate(in) + citrate(out) = D-threo-isocitrate(out) + citrate(in). It catalyses the reaction citrate(out) + succinate(in) = citrate(in) + succinate(out). The catalysed reaction is cis-aconitate(in) + citrate(out) = cis-aconitate(out) + citrate(in). The enzyme catalyses trans-aconitate(in) + citrate(out) = trans-aconitate(out) + citrate(in). It carries out the reaction phosphoenolpyruvate(in) + citrate(out) = phosphoenolpyruvate(out) + citrate(in). It catalyses the reaction maleate(in) + citrate(out) = maleate(out) + citrate(in). Functionally, mitochondrial electroneutral antiporter that exports citrate from the mitochondria into the cytosol in exchange for malate. Also able to mediate the exchange of citrate for isocitrate, phosphoenolpyruvate, cis-aconitate and to a lesser extent trans-aconitate, maleate and succinate. In the cytoplasm, citrate plays important roles in fatty acid and sterol synthesis, regulation of glycolysis, protein acetylation, and other physiopathological processes. This chain is Tricarboxylate transport protein A, mitochondrial, found in Danio rerio (Zebrafish).